The following is a 235-amino-acid chain: Small ribosomal subunit protein uS3 (235 aa).

In terms of domain architecture, KH type-2 spans 39-107 (VRKFLNKELA…PAQINIAEVK (69 aa)). The disordered stretch occupies residues 215-235 (AQPEQQPADKPKKAPRGKGRK).

It belongs to the universal ribosomal protein uS3 family. As to quaternary structure, part of the 30S ribosomal subunit. Forms a tight complex with proteins S10 and S14.

Functionally, binds the lower part of the 30S subunit head. Binds mRNA in the 70S ribosome, positioning it for translation. This is Small ribosomal subunit protein uS3 from Pasteurella multocida (strain Pm70).